A 254-amino-acid chain; its full sequence is AA9 family lytic polysaccharide monooxygenase A (254 aa).

Residues M1–A19 form the signal peptide. Residue H20 participates in Cu(2+) binding. H20 carries the methylhistidine modification. V28 provides a ligand contact to (1,4-beta-D-glucosyl)n. N52 is a glycosylation site (N-linked (GlcNAc...) asparagine). C60 and C186 are joined by a disulfide. (1,4-beta-D-glucosyl)n is bound by residues V66, V67, D77, and N86. H97 is a Cu(2+) binding site. The N-linked (GlcNAc...) asparagine glycan is linked to N129. V148 and R159 together coordinate (1,4-beta-D-glucosyl)n. O2 is bound by residues H166 and Q181. Y183 contributes to the Cu(2+) binding site.

It belongs to the polysaccharide monooxygenase AA9 family. It depends on Cu(2+) as a cofactor. The catalytically essential N-terminal histidine His-20 is post-translationally modified by methylation to prevent protonation of the histidine side chain, and protect the critical active site of the enzyme from oxidative damage.

It localises to the secreted. It catalyses the reaction [(1-&gt;4)-beta-D-glucosyl]n+m + reduced acceptor + O2 = 4-dehydro-beta-D-glucosyl-[(1-&gt;4)-beta-D-glucosyl]n-1 + [(1-&gt;4)-beta-D-glucosyl]m + acceptor + H2O.. The polyphenol cinnamtannin B1 contained in methanolic extract of Cinnamomum cassia (cinnamon) acts as an inhibitor of catalytic activity. Functionally, lytic polysaccharide monooxygenase (LPMO) that depolymerizes crystalline and amorphous polysaccharides via the oxidation of scissile alpha- or beta-(1-4)-glycosidic bonds, yielding C1 or C4 oxidation product. Catalysis by LPMOs requires the reduction of the active-site copper from Cu(II) to Cu(I) by a reducing agent and H(2)O(2) or O(2) as a cosubstrate. Is able to cleave phosphoric acid swollen cellulose (PASC) in the presence of a reducing agent, yielding a range of cellooligosaccharides dominated by cellobiose and cellotriose. Activity is less sensitive to the reducing agent potential when cleaving xylan, suggesting that distinct catalytic mechanisms exist for xylan and glucan cleavage. The protein is AA9 family lytic polysaccharide monooxygenase A of Panus similis (Lentinoid fungus).